Here is a 293-residue protein sequence, read N- to C-terminus: Eukaryotic translation initiation factor 3 subunit F (293 aa).

Alanine 2 carries the N-acetylalanine modification. An MPN domain is found at 28–159 (ARIHPLVIFN…IKAFVSSNLS (132 aa)).

The protein belongs to the eIF-3 subunit F family. As to quaternary structure, component of the eukaryotic translation initiation factor 3 (eIF-3) complex. Binds to TIF3E1 and TIF3H1. Expressed in inflorescences, leaves, stems, siliques, roots and seedlings. Accumulates at highly levels in pollen grains, developing embryos and root tips.

It is found in the cytoplasm. Component of the eukaryotic translation initiation factor 3 (eIF-3) complex, which is involved in protein synthesis of a specialized repertoire of mRNAs and, together with other initiation factors, stimulates binding of mRNA and methionyl-tRNAi to the 40S ribosome. The eIF-3 complex specifically targets and initiates translation of a subset of mRNAs involved in cell proliferation (Potential). Involved in cell growth and differentiation, especially during embryogenesis and male gametophyte germination. Regulates sensitivity to sugars (e.g. sucrose). This is Eukaryotic translation initiation factor 3 subunit F (TIF3F1) from Arabidopsis thaliana (Mouse-ear cress).